The sequence spans 211 residues: Large ribosomal subunit protein uL3 (211 aa).

The residue at position 150 (glutamine 150) is an N5-methylglutamine.

This sequence belongs to the universal ribosomal protein uL3 family. In terms of assembly, part of the 50S ribosomal subunit. Forms a cluster with proteins L14 and L19. Methylated by PrmB.

In terms of biological role, one of the primary rRNA binding proteins, it binds directly near the 3'-end of the 23S rRNA, where it nucleates assembly of the 50S subunit. This is Large ribosomal subunit protein uL3 from Pseudomonas fluorescens (strain ATCC BAA-477 / NRRL B-23932 / Pf-5).